Reading from the N-terminus, the 938-residue chain is Isoleucine--tRNA ligase (938 aa).

Positions 58-68 (PYANGHLHMGH) match the 'HIGH' region motif. E566 lines the L-isoleucyl-5'-AMP pocket. Residues 607-611 (KMSKS) carry the 'KMSKS' region motif. Residue K610 participates in ATP binding. Residues C906, C909, C926, and C929 each coordinate Zn(2+).

This sequence belongs to the class-I aminoacyl-tRNA synthetase family. IleS type 1 subfamily. Monomer. Zn(2+) is required as a cofactor.

It is found in the cytoplasm. It catalyses the reaction tRNA(Ile) + L-isoleucine + ATP = L-isoleucyl-tRNA(Ile) + AMP + diphosphate. Catalyzes the attachment of isoleucine to tRNA(Ile). As IleRS can inadvertently accommodate and process structurally similar amino acids such as valine, to avoid such errors it has two additional distinct tRNA(Ile)-dependent editing activities. One activity is designated as 'pretransfer' editing and involves the hydrolysis of activated Val-AMP. The other activity is designated 'posttransfer' editing and involves deacylation of mischarged Val-tRNA(Ile). The chain is Isoleucine--tRNA ligase from Desulfovibrio desulfuricans (strain ATCC 27774 / DSM 6949 / MB).